The following is a 358-amino-acid chain: Peptide chain release factor 1 (358 aa).

The residue at position 233 (Gln233) is an N5-methylglutamine.

The protein belongs to the prokaryotic/mitochondrial release factor family. Methylated by PrmC. Methylation increases the termination efficiency of RF1.

Its subcellular location is the cytoplasm. Peptide chain release factor 1 directs the termination of translation in response to the peptide chain termination codons UAG and UAA. This chain is Peptide chain release factor 1, found in Clostridium botulinum (strain Okra / Type B1).